The chain runs to 264 residues: Thymidylate synthase (264 aa).

R21 contributes to the dUMP binding site. Position 51 (H51) interacts with (6R)-5,10-methylene-5,6,7,8-tetrahydrofolate. 126–127 (RR) is a binding site for dUMP. The Nucleophile role is filled by C146. Residues 166–169 (RSCD), N177, and 207–209 (HLY) contribute to the dUMP site. D169 serves as a coordination point for (6R)-5,10-methylene-5,6,7,8-tetrahydrofolate. (6R)-5,10-methylene-5,6,7,8-tetrahydrofolate is bound at residue A263.

The protein belongs to the thymidylate synthase family. Bacterial-type ThyA subfamily. As to quaternary structure, homodimer.

The protein localises to the cytoplasm. The catalysed reaction is dUMP + (6R)-5,10-methylene-5,6,7,8-tetrahydrofolate = 7,8-dihydrofolate + dTMP. It participates in pyrimidine metabolism; dTTP biosynthesis. Functionally, catalyzes the reductive methylation of 2'-deoxyuridine-5'-monophosphate (dUMP) to 2'-deoxythymidine-5'-monophosphate (dTMP) while utilizing 5,10-methylenetetrahydrofolate (mTHF) as the methyl donor and reductant in the reaction, yielding dihydrofolate (DHF) as a by-product. This enzymatic reaction provides an intracellular de novo source of dTMP, an essential precursor for DNA biosynthesis. This is Thymidylate synthase from Photorhabdus laumondii subsp. laumondii (strain DSM 15139 / CIP 105565 / TT01) (Photorhabdus luminescens subsp. laumondii).